The primary structure comprises 249 residues: Electron transfer flavoprotein subunit beta (249 aa).

This sequence belongs to the ETF beta-subunit/FixA family. As to quaternary structure, heterodimer of an alpha and a beta subunit. Requires FAD as cofactor. The cofactor is AMP.

The electron transfer flavoprotein serves as a specific electron acceptor for other dehydrogenases. It transfers the electrons to the main respiratory chain via ETF-ubiquinone oxidoreductase (ETF dehydrogenase). The chain is Electron transfer flavoprotein subunit beta (etfB) from Bradyrhizobium diazoefficiens (strain JCM 10833 / BCRC 13528 / IAM 13628 / NBRC 14792 / USDA 110).